The primary structure comprises 166 residues: MSQATKRKHVVKEVLGEHIVPSDQQQIVRVLRTPGNNLHEVETAQGQRFLVSMPSKYRKNIWIKRGDFLIVDPIEEGEKVKAEISFVLCKDHVRSLQKEGFWPEAFSEVAEKHNNNRNRQTQPELPAEPQLSGEESSSEDDSDLFVNTNRRQYRESEEESEEEEAA.

The region spanning 5 to 89 (TKRKHVVKEV…VKAEISFVLC (85 aa)) is the S1-like domain. Positions 6–12 (KRKHVVK) match the Nuclear localization signal motif. At Thr33 the chain carries Phosphothreonine. Residues 56-65 (KYRKNIWIKR) carry the Nuclear localization signal motif. The interval 114 to 166 (NNNRNRQTQPELPAEPQLSGEESSSEDDSDLFVNTNRRQYRESEEESEEEEAA) is disordered. A phosphoserine mark is found at Ser132, Ser136, Ser137, Ser138, Ser156, and Ser160. Residues 156-166 (SEEESEEEEAA) are compositionally biased toward acidic residues.

This sequence belongs to the EIF1AD family. As to quaternary structure, interacts with GAPDH and STAT1.

Its subcellular location is the nucleus. Functionally, plays a role into cellular response to oxidative stress. Decreases cell proliferation. The polypeptide is Probable RNA-binding protein EIF1AD (EIF1AD) (Pongo abelii (Sumatran orangutan)).